Reading from the N-terminus, the 196-residue chain is PRADC1-like protein (196 aa).

The signal sequence occupies residues 1-18; sequence MLIAWLVLAATLSRSIRA. A PA domain is found at 73 to 171; it reads ITDPPGACQE…STLQRLKRVH (99 aa). N-linked (GlcNAc...) asparagine glycosylation is present at Asn-179.

The protein resides in the secreted. Its function is as follows. May be involved in iversification of muscle cell fates. This chain is PRADC1-like protein, found in Drosophila melanogaster (Fruit fly).